The chain runs to 241 residues: Nuclear receptor-interacting protein 3 (241 aa).

The polypeptide is Nuclear receptor-interacting protein 3 (NRIP3) (Homo sapiens (Human)).